A 181-amino-acid chain; its full sequence is Inner membrane-spanning protein YciB (181 aa).

Transmembrane regions (helical) follow at residues 8–28 (FPIICFFVAYKFWGIYIATAA), 53–73 (ITLIFILLLGSFTLVFHNAIF), 76–96 (WKPTIVYWIFAIVLFGSHFFG), 121–141 (LSWALFFLILGVLNLFVVYNF), and 149–169 (FKLFGTLVLTLVFILGQAFYI).

It belongs to the YciB family.

The protein localises to the cell inner membrane. In terms of biological role, plays a role in cell envelope biogenesis, maintenance of cell envelope integrity and membrane homeostasis. This is Inner membrane-spanning protein YciB from Coxiella burnetii (strain RSA 331 / Henzerling II).